The chain runs to 264 residues: Carbonic anhydrase 7 (264 aa).

The region spanning 5-262 is the Alpha-carbonic anhydrase domain; that stretch reads HGWGYGQDDG…LKGRVVKASF (258 aa). The active-site Proton donor/acceptor is the His66. Zn(2+)-binding residues include His96, His98, and His121. 201–202 is a binding site for substrate; the sequence is TT.

It belongs to the alpha-carbonic anhydrase family. Zn(2+) is required as a cofactor.

It is found in the cytoplasm. It carries out the reaction hydrogencarbonate + H(+) = CO2 + H2O. Its activity is regulated as follows. Activated by histamine, L-adrenaline, L- and D-histidine, and L- and D-phenylalanine. Inhibited by coumarins, sulfonamide derivatives such as acetazolamide (AZA), by saccharin and Foscarnet (phosphonoformate trisodium salt). Functionally, reversible hydration of carbon dioxide. This chain is Carbonic anhydrase 7 (CA7), found in Homo sapiens (Human).